We begin with the raw amino-acid sequence, 639 residues long: Eukaryotic translation initiation factor 2-alpha kinase 2 (639 aa).

The Protein kinase domain maps to 171 to 588; that stretch reads FEEYSLLGRG…LEVLNCGLLL (418 aa). Residues 177-185 and Lys200 each bind ATP; that span reads LGRGGFGSV. Low complexity predominate over residues 298–320; the sequence is ISTSRKSSYSSTTESSNFENLES. Residues 298-322 are disordered; it reads ISTSRKSSYSSTTESSNFENLESPR. Catalysis depends on Asp417, which acts as the Proton acceptor.

Belongs to the protein kinase superfamily. Ser/Thr protein kinase family. GCN2 subfamily. Autophosphorylated.

The catalysed reaction is L-seryl-[protein] + ATP = O-phospho-L-seryl-[protein] + ADP + H(+). It catalyses the reaction L-threonyl-[protein] + ATP = O-phospho-L-threonyl-[protein] + ADP + H(+). In terms of biological role, mediates down-regulation of protein synthesis in response to stress conditions by the phosphorylation of the alpha subunit of eIF-2 (tif211) on 'Ser-52'. Protein synthesis is inhibited at the level of initiation. Activity is inhibited in the presence of heme. This chain is Eukaryotic translation initiation factor 2-alpha kinase 2 (hri2), found in Schizosaccharomyces pombe (strain 972 / ATCC 24843) (Fission yeast).